A 547-amino-acid polypeptide reads, in one-letter code: Alpha-1,3-mannosyl-glycoprotein 4-beta-N-acetylglucosaminyltransferase B (547 aa).

At 1-7 the chain is on the cytoplasmic side; it reads MRLRNGT. The chain crosses the membrane as a helical; Signal-anchor for type II membrane protein span at residues 8–28; that stretch reads FLTVLLFGLCGLISLSWYTAF. The Lumenal segment spans residues 29–547; sequence SNSKGNVVDI…LSEIFIKKAE (519 aa). Residues 36–83 are a coiled coil; it reads VDIYQREFLALRDRLHSAEQENLKRSKELNLVLDEIKRAIAEKQALRD. 3 N-linked (GlcNAc...) asparagine glycosylation sites follow: asparagine 85, asparagine 101, and asparagine 464.

It belongs to the glycosyltransferase 54 family. The cofactor is a divalent metal cation. N-glycosylated.

The protein resides in the golgi apparatus membrane. It carries out the reaction N(4)-{beta-D-GlcNAc-(1-&gt;2)-alpha-D-Man-(1-&gt;3)-[beta-D-GlcNAc-(1-&gt;2)-alpha-D-Man-(1-&gt;6)]-beta-D-Man-(1-&gt;4)-beta-D-GlcNAc-(1-&gt;4)-beta-D-GlcNAc}-L-asparaginyl-[protein] + UDP-N-acetyl-alpha-D-glucosamine = N(4)-{beta-D-GlcNAc-(1-&gt;2)-[beta-D-GlcNAc-(1-&gt;4)]-alpha-D-Man-(1-&gt;3)-[beta-D-GlcNAc-(1-&gt;2)-alpha-D-Man-(1-&gt;6)]-beta-D-Man-(1-&gt;4)-beta-D-GlcNAc-(1-&gt;4)-beta-D-GlcNAc}-L-asparaginyl-[protein] + UDP + H(+). It catalyses the reaction an N(4)-{beta-D-GlcNAc-(1-&gt;2)-alpha-D-Man-(1-&gt;3)-[alpha-D-Man-(1-&gt;6)]-beta-D-Man-(1-&gt;4)-beta-D-GlcNAc-(1-&gt;4)-beta-D-GlcNAc}-L-asparaginyl-[protein] + UDP-N-acetyl-alpha-D-glucosamine = an N(4)-{beta-D-GlcNAc-(1-&gt;2)-[beta-D-GlcNAc-(1-&gt;4)]-alpha-D-Man-(1-&gt;3)-[alpha-D-Man-(1-&gt;6)]-beta-D-Man-(1-&gt;4)-beta-D-GlcNAc-(1-&gt;4)-beta-D-GlcNAc}-L-asparaginyl-[protein] + UDP + H(+). The enzyme catalyses an N(4)-{beta-D-GlcNAc-(1-&gt;2)-alpha-D-Man-(1-&gt;3)-[beta-D-GlcNAc-(1-&gt;2)-[beta-D-GlcNAc-(1-&gt;6)]-alpha-D-Man-(1-&gt;6)]-beta-D-Man-(1-&gt;4)-beta-D-GlcNAc-(1-&gt;4)-beta-D-GlcNAc}-L-asparaginyl-[protein] + UDP-N-acetyl-alpha-D-glucosamine = an N(4)-{beta-D-GlcNAc-(1-&gt;2)-[beta-D-GlcNAc-(1-&gt;4)]-alpha-D-Man-(1-&gt;3)-[beta-D-GlcNAc-(1-&gt;2)-[beta-D-GlcNAc-(1-&gt;6)]-alpha-D-Man-(1-&gt;6)]-beta-D-Man-(1-&gt;4)-beta-D-GlcNAc-(1-&gt;4)-beta-D-GlcNAc}-L-asparaginyl-[protein] + UDP + H(+). The catalysed reaction is an N(4)-{beta-D-GlcNAc-(1-&gt;2)-alpha-D-Man-(1-&gt;3)-[beta-D-GlcNAc-(1-&gt;2)-alpha-D-Man-(1-&gt;6)]-beta-D-Man-(1-&gt;4)-beta-D-GlcNAc-(1-&gt;4)-[alpha-L-Fuc-(1-&gt;6)]-beta-D-GlcNAc}-L-asparaginyl-[protein] + UDP-N-acetyl-alpha-D-glucosamine = N(4)-{beta-D-GlcNAc-(1-&gt;2)-[beta-D-GlcNAc-(1-&gt;4)]-alpha-D-Man-(1-&gt;3)-[beta-D-GlcNAc-(1-&gt;2)-alpha-D-Man-(1-&gt;6)]-beta-D-Man-(1-&gt;4)-beta-D-GlcNAc-(1-&gt;4)-[alpha-L-Fuc-(1-&gt;6)]-beta-D-GlcNAc}-asparaginyl-[protein] + UDP + H(+). It carries out the reaction an N(4)-{beta-D-GlcNAc-(1-&gt;2)-alpha-D-Man-(1-&gt;3)-[beta-D-Gal-(1-&gt;4)-beta-D-GlcNAc-(1-&gt;2)-alpha-D-Man-(1-&gt;6)]-beta-D-Man-(1-&gt;4)-beta-D-GlcNAc-(1-&gt;4)-beta-D-GlcNAc}-L-asparaginyl-[protein] + UDP-N-acetyl-alpha-D-glucosamine = an N(4)-{beta-D-GlcNAc-(1-&gt;2)-[beta-D-GlcNAc-(1-&gt;4)]-alpha-D-Man-(1-&gt;3)-[beta-D-Gal-(1-&gt;4)-beta-D-GlcNAc-(1-&gt;2)-alpha-D-Man-(1-&gt;6)]-beta-D-Man-(1-&gt;4)-beta-D-GlcNAc-(1-&gt;4)-beta-D-GlcNAc}-L-asparaginyl-[protein] + UDP + H(+). It catalyses the reaction N(4)-{beta-D-GlcNAc-(1-&gt;2)-alpha-D-Man-(1-&gt;3)-[alpha-D-Man-(1-&gt;3)-{alpha-D-Man-(1-&gt;6)}-alpha-D-Man-(1-&gt;6)]-beta-D-Man-(1-&gt;4)-beta-D-GlcNAc-(1-&gt;4)-beta-D-GlcNAc}-asparaginyl-[protein] + UDP-N-acetyl-alpha-D-glucosamine = N(4)-{beta-D-GlcNAc-(1-&gt;2)-[beta-D-GlcNAc-(1-&gt;4)]-alpha-D-Man-(1-&gt;3)-[alpha-D-Man-(1-&gt;3)-{alpha-D-Man-(1-&gt;6)}-alpha-D-Man-(1-&gt;6)]-beta-D-Man-(1-&gt;4)-beta-D-GlcNAc-(1-&gt;4)-beta-D-GlcNAc}-asparaginyl-[protein] + UDP + H(+). The enzyme catalyses N(4)-{beta-D-GlcNAc-(1-&gt;2)-alpha-D-Man-(1-&gt;3)-beta-D-Man-(1-&gt;4)-beta-D-GlcNAc-(1-&gt;4)-beta-D-GlcNAc}-asparaginyl-[protein] + UDP-N-acetyl-alpha-D-glucosamine = N(4)-{beta-D-GlcNAc-(1-&gt;2)-[beta-D-GlcNAc-(1-&gt;4)]-alpha-D-Man-(1-&gt;3)-beta-D-Man-(1-&gt;4)-beta-D-GlcNAc-(1-&gt;4)-beta-D-GlcNAc}-asparaginyl-[protein] + UDP + H(+). Its pathway is protein modification; protein glycosylation. In terms of biological role, glycosyltransferase that catalyze the transfer of GlcNAc from UDP-GlcNAc to the GlcNAcbeta1-2Manalpha1-3 arm of the core structure of N-linked glycans through a beta1-4 linkage and participates in the production of tri- and tetra-antennary N-linked sugar chains. Prefers complex-type N-glycans over hybrid-types. Has lower affinities for donors or acceptors than MGAT4A, suggesting that, under physiological conditions, it is not the main contributor in N-glycan biosynthesis. This is Alpha-1,3-mannosyl-glycoprotein 4-beta-N-acetylglucosaminyltransferase B (mgat4bQ9UQ53) from Danio rerio (Zebrafish).